The following is a 644-amino-acid chain: Chaperone protein HscA (644 aa).

It belongs to the heat shock protein 70 family.

Its function is as follows. Chaperone involved in the maturation of iron-sulfur cluster-containing proteins. Has a low intrinsic ATPase activity which is markedly stimulated by HscB. Involved in the maturation of IscU. The polypeptide is Chaperone protein HscA (Yersinia pseudotuberculosis serotype I (strain IP32953)).